The chain runs to 429 residues: Gamma-glutamyl phosphate reductase (429 aa).

This sequence belongs to the gamma-glutamyl phosphate reductase family.

It localises to the cytoplasm. It catalyses the reaction L-glutamate 5-semialdehyde + phosphate + NADP(+) = L-glutamyl 5-phosphate + NADPH + H(+). Its pathway is amino-acid biosynthesis; L-proline biosynthesis; L-glutamate 5-semialdehyde from L-glutamate: step 2/2. Functionally, catalyzes the NADPH-dependent reduction of L-glutamate 5-phosphate into L-glutamate 5-semialdehyde and phosphate. The product spontaneously undergoes cyclization to form 1-pyrroline-5-carboxylate. This chain is Gamma-glutamyl phosphate reductase, found in Bradyrhizobium sp. (strain ORS 278).